A 210-amino-acid chain; its full sequence is ATP phosphoribosyltransferase (210 aa).

This sequence belongs to the ATP phosphoribosyltransferase family. Short subfamily. In terms of assembly, heteromultimer composed of HisG and HisZ subunits.

It localises to the cytoplasm. The enzyme catalyses 1-(5-phospho-beta-D-ribosyl)-ATP + diphosphate = 5-phospho-alpha-D-ribose 1-diphosphate + ATP. Its pathway is amino-acid biosynthesis; L-histidine biosynthesis; L-histidine from 5-phospho-alpha-D-ribose 1-diphosphate: step 1/9. In terms of biological role, catalyzes the condensation of ATP and 5-phosphoribose 1-diphosphate to form N'-(5'-phosphoribosyl)-ATP (PR-ATP). Has a crucial role in the pathway because the rate of histidine biosynthesis seems to be controlled primarily by regulation of HisG enzymatic activity. This is ATP phosphoribosyltransferase from Caldanaerobacter subterraneus subsp. tengcongensis (strain DSM 15242 / JCM 11007 / NBRC 100824 / MB4) (Thermoanaerobacter tengcongensis).